The sequence spans 717 residues: MTKLAQWMFEQYVKDLNLKNRGSPSFRKWLTLQPSLLRYSGVMRANAFDILKYGYPMQQSGYTVATLEIHFKNIRSSFANIYWNRDSEEPEYVCCCATYQSHDGEYRYRFVWYQPFIEAYNAIETALDSLETIILNLIAARDLDFVVHIFPYNKGHEDYLASTQLILKIFIATLLMDILRIKDNTLDVHLNSDYIIVMERLWPHIKDAIEQFFEAHKDLLGYLIAFRNGGNFAGSLRPSCGQKIVPLTIREALQINDINLAVWREVFIMQECSDLVINGIAPCFPIFNTWTYLQGINQIFFENTSLQEKFKKDFIARELSKEIIKGQKILNDIEFKKLSLHQIQYMESFLLMSDVAIMITTEYVGYTLQSLPGIISRSSYLSPIVKNILMDEDSFMSLLFDLCYGAYVLHKKENVIHADLHLNNMTYYHFNPTSFTDRNKPGKYTLKVNNPVIAFITGPKVETETYVFKHIDGFGCIIDFSRAIMGPNHAIKLERQYGLAFVNTFYRNQSEHILKVLRYYFPEMLTNRENEIQGVILSNFNFFFNSITAIDFYAIARNLRSMLSLDYLHTSEVKRNVEISQTFLDTCQFLEEKAVEFLFKNLHTVLSGKPVEKTAGDVLLPIVFKKFLYPNIPKNILRSFTVIDVYNYNNIKRYSGKAIQTFPPWAQTKEILTHAEGRTFEDIFPRGELVFKKAYAENNYLDKILQRIREQLANENL.

Belongs to the asfivirus C717R family.

The protein localises to the virion. This is an uncharacterized protein from African swine fever virus (isolate Tick/Malawi/Lil 20-1/1983) (ASFV).